We begin with the raw amino-acid sequence, 443 residues long: Probable glycine dehydrogenase (decarboxylating) subunit 1 (443 aa).

Belongs to the GcvP family. N-terminal subunit subfamily. In terms of assembly, the glycine cleavage system is composed of four proteins: P, T, L and H. In this organism, the P 'protein' is a heterodimer of two subunits.

The catalysed reaction is N(6)-[(R)-lipoyl]-L-lysyl-[glycine-cleavage complex H protein] + glycine + H(+) = N(6)-[(R)-S(8)-aminomethyldihydrolipoyl]-L-lysyl-[glycine-cleavage complex H protein] + CO2. The glycine cleavage system catalyzes the degradation of glycine. The P protein binds the alpha-amino group of glycine through its pyridoxal phosphate cofactor; CO(2) is released and the remaining methylamine moiety is then transferred to the lipoamide cofactor of the H protein. The protein is Probable glycine dehydrogenase (decarboxylating) subunit 1 of Nitratidesulfovibrio vulgaris (strain DP4) (Desulfovibrio vulgaris).